A 245-amino-acid chain; its full sequence is MSQSTSVFRRNGFTFKQFFVAHDRCAMKAGTDGILLGAWAPVAGVKRCLDIGAGSGLLALMLAQRTDDSVMIDAVELESEAAAQAQENINQSPWAERINVHTADILQWITQQTVRFDLIISNPPYYQQGVECATPQREQARYTTTLDHPSLLTCAAECITEEGFFCVVLPEQIGNGFTELALSMGWHLRLRTDVAENEARLPHRVLLAFSPQAGECFSDRLVIRGPDQNYSEAYTALTQAFYLFM.

This sequence belongs to the methyltransferase superfamily. tRNA (adenine-N(6)-)-methyltransferase family.

The protein resides in the cytoplasm. It carries out the reaction adenosine(37) in tRNA1(Val) + S-adenosyl-L-methionine = N(6)-methyladenosine(37) in tRNA1(Val) + S-adenosyl-L-homocysteine + H(+). Specifically methylates the adenine in position 37 of tRNA(1)(Val) (anticodon cmo5UAC). The sequence is that of tRNA1(Val) (adenine(37)-N6)-methyltransferase from Escherichia coli O6:K15:H31 (strain 536 / UPEC).